Consider the following 214-residue polypeptide: Ribosomal RNA small subunit methyltransferase G (214 aa).

S-adenosyl-L-methionine is bound by residues Gly-56, Phe-61, 107 to 108, and Arg-125; that span reads IE.

It belongs to the methyltransferase superfamily. RNA methyltransferase RsmG family.

The protein localises to the cytoplasm. In terms of biological role, specifically methylates the N7 position of a guanine in 16S rRNA. This chain is Ribosomal RNA small subunit methyltransferase G, found in Syntrophomonas wolfei subsp. wolfei (strain DSM 2245B / Goettingen).